The chain runs to 398 residues: Phosphoglycerate kinase (398 aa).

Substrate is bound by residues 24–26, Arg-39, 62–65, Arg-121, and Arg-154; these read DFN and HFGR. ATP is bound by residues Lys-205, Gly-296, Glu-327, and 354–357; that span reads GGDS.

This sequence belongs to the phosphoglycerate kinase family. As to quaternary structure, monomer.

The protein resides in the cytoplasm. The enzyme catalyses (2R)-3-phosphoglycerate + ATP = (2R)-3-phospho-glyceroyl phosphate + ADP. It functions in the pathway carbohydrate degradation; glycolysis; pyruvate from D-glyceraldehyde 3-phosphate: step 2/5. The sequence is that of Phosphoglycerate kinase from Trichodesmium erythraeum (strain IMS101).